We begin with the raw amino-acid sequence, 350 residues long: Galactokinase (350 aa).

Position 14 to 17 (14 to 17 (EHTD)) interacts with substrate. Residues S46 and 98–104 (GSGLSSS) each bind ATP. Residues S104 and E136 each coordinate Mg(2+). The active-site Proton acceptor is D148. Residue Y197 participates in substrate binding.

The protein belongs to the GHMP kinase family. GalK subfamily.

The protein resides in the cytoplasm. It carries out the reaction alpha-D-galactose + ATP = alpha-D-galactose 1-phosphate + ADP + H(+). It participates in carbohydrate metabolism; galactose metabolism. Functionally, catalyzes the transfer of the gamma-phosphate of ATP to D-galactose to form alpha-D-galactose-1-phosphate (Gal-1-P). The chain is Galactokinase from Thermococcus kodakarensis (strain ATCC BAA-918 / JCM 12380 / KOD1) (Pyrococcus kodakaraensis (strain KOD1)).